The sequence spans 108 residues: uncharacterized protein (108 aa).

The interval 81–108 (TNHHQQQQNHQNQQQQQQQPNGIFENNI) is disordered. A compositionally biased stretch (low complexity) spans 83 to 99 (HHQQQQNHQNQQQQQQQ).

This is an uncharacterized protein from Dictyostelium discoideum (Social amoeba).